A 303-amino-acid chain; its full sequence is Porphobilinogen deaminase (303 aa).

Cys-240 is modified (S-(dipyrrolylmethanemethyl)cysteine).

The protein belongs to the HMBS family. Monomer. It depends on dipyrromethane as a cofactor.

The catalysed reaction is 4 porphobilinogen + H2O = hydroxymethylbilane + 4 NH4(+). Its pathway is porphyrin-containing compound metabolism; protoporphyrin-IX biosynthesis; coproporphyrinogen-III from 5-aminolevulinate: step 2/4. In terms of biological role, tetrapolymerization of the monopyrrole PBG into the hydroxymethylbilane pre-uroporphyrinogen in several discrete steps. This chain is Porphobilinogen deaminase, found in Stenotrophomonas maltophilia (strain R551-3).